We begin with the raw amino-acid sequence, 403 residues long: Phosphoglycerate kinase (403 aa).

Residues 22–24, Arg37, 60–63, Arg119, and Arg156 each bind substrate; these read DLN and HLGR. ATP is bound by residues Lys206, Gly302, Glu333, and 359–362; that span reads GGDS.

Belongs to the phosphoglycerate kinase family. As to quaternary structure, monomer.

It is found in the cytoplasm. The enzyme catalyses (2R)-3-phosphoglycerate + ATP = (2R)-3-phospho-glyceroyl phosphate + ADP. Its pathway is carbohydrate degradation; glycolysis; pyruvate from D-glyceraldehyde 3-phosphate: step 2/5. The sequence is that of Phosphoglycerate kinase from Streptomyces griseus subsp. griseus (strain JCM 4626 / CBS 651.72 / NBRC 13350 / KCC S-0626 / ISP 5235).